Consider the following 25-residue polypeptide: Caerin-1.5 (25 aa).

Position 25 is a leucine amide (L25).

Expressed by the skin parotoid and/or rostral glands.

The protein localises to the secreted. Functionally, antibacterial peptide, that adopts an alpha helical conformation which can disrupt bacterial membranes. Each caerin displays a different antimicrobial specificity. This Ranoidea caerulea (Green tree frog) protein is Caerin-1.5.